Reading from the N-terminus, the 421-residue chain is 26S proteasome non-ATPase regulatory subunit 11A (421 aa).

The PCI domain occupies 227–391 (AYSYFYEAFE…GVLIVFDEPP (165 aa)).

This sequence belongs to the proteasome subunit S9 family. Component of the lid subcomplex of the 19S proteasome regulatory particle complex (also named PA700 complex). The 26S proteasome consists of a 20S proteasome core and two 19S regulatory subunits.

It is found in the nucleus. Its subcellular location is the cytoplasm. It localises to the cytosol. Functionally, component of the lid subcomplex of the 26S proteasome, a multiprotein complex involved in the ATP-dependent degradation of ubiquitinated proteins. In the complex, psmd11a is required for proteasome assembly. This chain is 26S proteasome non-ATPase regulatory subunit 11A (psmd11a), found in Danio rerio (Zebrafish).